A 345-amino-acid polypeptide reads, in one-letter code: Beta-ketoacyl-[acyl-carrier-protein] synthase III (345 aa).

Catalysis depends on residues Cys-114 and His-272. Residues 273–277 are ACP-binding; the sequence is QANQR. Asn-302 is a catalytic residue.

The protein belongs to the thiolase-like superfamily. FabH family. As to quaternary structure, homodimer.

The protein localises to the cytoplasm. The catalysed reaction is malonyl-[ACP] + acetyl-CoA + H(+) = 3-oxobutanoyl-[ACP] + CO2 + CoA. Its pathway is lipid metabolism; fatty acid biosynthesis. In terms of biological role, catalyzes the condensation reaction of fatty acid synthesis by the addition to an acyl acceptor of two carbons from malonyl-ACP. Catalyzes the first condensation reaction which initiates fatty acid synthesis and may therefore play a role in governing the total rate of fatty acid production. Possesses both acetoacetyl-ACP synthase and acetyl transacylase activities. Its substrate specificity determines the biosynthesis of branched-chain and/or straight-chain of fatty acids. In Rhodopirellula baltica (strain DSM 10527 / NCIMB 13988 / SH1), this protein is Beta-ketoacyl-[acyl-carrier-protein] synthase III.